We begin with the raw amino-acid sequence, 166 residues long: Packaging efficiency factor P6 (166 aa).

The tract at residues 134 to 166 is disordered; the sequence is ILPESAGDQQEAEPVPSVGDQQETAPRKRFRAI.

As to quaternary structure, heterodimer of P6 and P9; further multimerizes as hexamers of heterodimers. Part of the dodecameric portal complex that is composed of the packaging efficiency factor P6, the DNA packaging ATPase P9, and the internal heterododecamer P20/P22 which spans the virion inner membrane.

Its subcellular location is the virion. Functionally, together with the packaging ATPase P9, forms the external part of the portal vertex that is embeded in the capsid and which plays critical roles in genome packaging and genome ejection. Both proteins multimerize as a single ring-shaped heterdodecamer arranged around a central channel. The chain is Packaging efficiency factor P6 (VI) from Acinetobacter calcoaceticus (Arthrobacter siderocapsulatus).